Here is a 479-residue protein sequence, read N- to C-terminus: Proline--tRNA ligase 2 (479 aa).

This sequence belongs to the class-II aminoacyl-tRNA synthetase family. ProS type 3 subfamily. In terms of assembly, homodimer.

The protein localises to the cytoplasm. It catalyses the reaction tRNA(Pro) + L-proline + ATP = L-prolyl-tRNA(Pro) + AMP + diphosphate. Functionally, catalyzes the attachment of proline to tRNA(Pro) in a two-step reaction: proline is first activated by ATP to form Pro-AMP and then transferred to the acceptor end of tRNA(Pro). This is Proline--tRNA ligase 2 from Rhodococcus jostii (strain RHA1).